A 407-amino-acid polypeptide reads, in one-letter code: Proteasome-activating nucleotidase (407 aa).

Positions 22–67 (KEKTQIAELESKVLRLELKNKDVTRENVQIKKENEILKRELDKLRI) form a coiled coil. Residues 192 to 197 (GTGKTL) and His-331 each bind ATP. Positions 405–407 (MYG) are docks into pockets in the proteasome alpha-ring to cause gate opening.

Belongs to the AAA ATPase family. Homohexamer. The hexameric complex has a two-ring architecture resembling a top hat that caps the 20S proteasome core at one or both ends. Upon ATP-binding, the C-terminus of PAN interacts with the alpha-rings of the proteasome core by binding to the intersubunit pockets.

The protein localises to the cytoplasm. In terms of biological role, ATPase which is responsible for recognizing, binding, unfolding and translocation of substrate proteins into the archaeal 20S proteasome core particle. Is essential for opening the gate of the 20S proteasome via an interaction with its C-terminus, thereby allowing substrate entry and access to the site of proteolysis. Thus, the C-termini of the proteasomal ATPase function like a 'key in a lock' to induce gate opening and therefore regulate proteolysis. Unfolding activity requires energy from ATP hydrolysis, whereas ATP binding alone promotes ATPase-20S proteasome association which triggers gate opening, and supports translocation of unfolded substrates. This is Proteasome-activating nucleotidase from Methanococcus maripaludis (strain C7 / ATCC BAA-1331).